A 1179-amino-acid chain; its full sequence is Probable manganese-transporting ATPase PDR2 (1179 aa).

Over M1–K20 the chain is Cytoplasmic. A helical transmembrane segment spans residues Q21 to I42. The Lumenal segment spans residues V43–D50. The chain crosses the membrane as a helical span at residues A51 to W71. Over S72–K192 the chain is Cytoplasmic. A helical membrane pass occupies residues L193–L215. Over D216–F218 the chain is Lumenal. A helical membrane pass occupies residues W219–K238. Residues S239 to S402 are Cytoplasmic-facing. Residues G403 to V422 traverse the membrane as a helical segment. Topologically, residues K423–L435 are lumenal. Residues L436–M453 form a helical membrane-spanning segment. The Cytoplasmic segment spans residues E454–T947. Catalysis depends on D491, which acts as the 4-aspartylphosphate intermediate. Mg(2+)-binding residues include D812 and D816. Positions K833–R880 are disordered. Residues L948–V967 traverse the membrane as a helical segment. Topologically, residues M968–Q979 are lumenal. Residues A980–A997 form a helical membrane-spanning segment. Over R998–F1013 the chain is Cytoplasmic. Residues S1014–Y1034 form a helical membrane-spanning segment. The Lumenal portion of the chain corresponds to S1035–V1059. A helical transmembrane segment spans residues N1060–Y1079. Residues M1080 to K1092 lie on the Cytoplasmic side of the membrane. Residues P1093–S1110 form a helical membrane-spanning segment. Topologically, residues D1111–G1128 are lumenal. Residues L1129–E1148 form a helical membrane-spanning segment. Over R1149 to V1179 the chain is Cytoplasmic.

The protein belongs to the cation transport ATPase (P-type) (TC 3.A.3) family. Type V subfamily. As to expression, highly expressed in root meristem. Expressed in pavement cells of trichomes, stipules, stamens and pollen grains.

It is found in the endoplasmic reticulum membrane. It catalyses the reaction ATP + H2O = ADP + phosphate + H(+). Its function is as follows. Mediates manganese transport into the endoplasmic reticulum. The ATPase activity is required for cellular manganese homeostasis. Plays an important role in pollen and root development through its impact on protein secretion and transport processes. Functions together with LPR1 and LPR2 in a common pathway that adjusts root meristem activity to phosphate availability. Under phosphate limitation, restricts SHR movement in root meristem and is required for maintaining SCR expression in the root meristem stem-cell niche as well as for proximal meristem activity. Can complement the yeast spf1 mutant. This is Probable manganese-transporting ATPase PDR2 (PDR2) from Arabidopsis thaliana (Mouse-ear cress).